The primary structure comprises 234 residues: L-cystine transport system permease protein TcyB (234 aa).

Transmembrane regions (helical) follow at residues 8-28, 36-56, 78-98, 100-120, and 199-219; these read ALTL…WPIL, IPLT…TALA, TPLL…NVTL, PFPS…SEII, and ILVI…LLSL. Residues 32-221 enclose the ABC transmembrane type-1 domain; that stretch reads IYYTIPLTIL…IICFLLSLVQ (190 aa).

It belongs to the binding-protein-dependent transport system permease family. The complex is composed of two ATP-binding proteins (TcyC), two transmembrane proteins (TcyB) and a solute-binding protein (TcyA).

The protein localises to the cell membrane. Functionally, part of the ABC transporter complex TcyABC involved in L-cystine import. Probably responsible for the translocation of the substrate across the membrane. The polypeptide is L-cystine transport system permease protein TcyB (tcyB) (Bacillus subtilis (strain 168)).